The following is a 448-amino-acid chain: N-succinylarginine dihydrolase (448 aa).

Residues 19–28, N110, and 137–138 each bind substrate; these read GGLSYGNVAS and HR. Residue E174 is part of the active site. R214 lines the substrate pocket. Residue H250 is part of the active site. Residues D252 and N365 each contribute to the substrate site. The active-site Nucleophile is C371.

The protein belongs to the succinylarginine dihydrolase family. As to quaternary structure, homodimer.

It carries out the reaction N(2)-succinyl-L-arginine + 2 H2O + 2 H(+) = N(2)-succinyl-L-ornithine + 2 NH4(+) + CO2. The protein operates within amino-acid degradation; L-arginine degradation via AST pathway; L-glutamate and succinate from L-arginine: step 2/5. Its function is as follows. Catalyzes the hydrolysis of N(2)-succinylarginine into N(2)-succinylornithine, ammonia and CO(2). In Pseudomonas aeruginosa (strain LESB58), this protein is N-succinylarginine dihydrolase.